Reading from the N-terminus, the 136-residue chain is Protein NrdI (136 aa).

This sequence belongs to the NrdI family.

Its function is as follows. Probably involved in ribonucleotide reductase function. This chain is Protein NrdI, found in Klebsiella pneumoniae (strain 342).